A 702-amino-acid polypeptide reads, in one-letter code: Methionine--tRNA ligase (702 aa).

The short motif at Pro-23–His-33 is the 'HIGH' region element. Zn(2+)-binding residues include Cys-154, Cys-157, Cys-167, and Cys-170. The 'KMSKS' region motif lies at Lys-341–Ser-345. Residue Lys-344 participates in ATP binding. The segment at Leu-562–Pro-593 is disordered. Over residues Ala-569–Asn-578 the composition is skewed to polar residues. Residues Asp-599–Arg-702 enclose the tRNA-binding domain.

It belongs to the class-I aminoacyl-tRNA synthetase family. MetG type 1 subfamily. As to quaternary structure, homodimer. It depends on Zn(2+) as a cofactor.

It localises to the cytoplasm. It carries out the reaction tRNA(Met) + L-methionine + ATP = L-methionyl-tRNA(Met) + AMP + diphosphate. In terms of biological role, is required not only for elongation of protein synthesis but also for the initiation of all mRNA translation through initiator tRNA(fMet) aminoacylation. The chain is Methionine--tRNA ligase from Xylella fastidiosa (strain 9a5c).